Reading from the N-terminus, the 871-residue chain is Probable LRR receptor-like serine/threonine-protein kinase At1g51810 (871 aa).

An N-terminal signal peptide occupies residues 1–20 (MERHCLFFVIFSLILHLVQA). Topologically, residues 21–512 (QDPIGFINLD…GRQIKSMTIP (492 aa)) are extracellular. Asn93, Asn179, Asn229, Asn283, Asn295, Asn396, Asn410, Asn439, Asn458, Asn463, and Asn489 each carry an N-linked (GlcNAc...) asparagine glycan. LRR repeat units lie at residues 405-426 (IITS…TIQN), 429-449 (NLQE…EFLA), and 453-474 (SLLV…KLIE). Residues 513-533 (IVASIGSVVAFTVALMIFCVV) traverse the membrane as a helical segment. Topologically, residues 534–871 (RKNNPSNDEA…FGTEVAPMAR (338 aa)) are cytoplasmic. Thr568 carries the post-translational modification Phosphothreonine. The region spanning 577–850 (NNFQKILGKG…QVVFELKECL (274 aa)) is the Protein kinase domain. ATP-binding positions include 583 to 591 (LGKGGFGIV) and Lys605. The residue at position 650 (Tyr650) is a Phosphotyrosine. The Proton acceptor role is filled by Asp702. Phosphoserine is present on Ser736. Phosphothreonine occurs at positions 737 and 742. Phosphotyrosine is present on Tyr750.

Belongs to the protein kinase superfamily. Ser/Thr protein kinase family.

It is found in the membrane. The enzyme catalyses L-seryl-[protein] + ATP = O-phospho-L-seryl-[protein] + ADP + H(+). It catalyses the reaction L-threonyl-[protein] + ATP = O-phospho-L-threonyl-[protein] + ADP + H(+). The chain is Probable LRR receptor-like serine/threonine-protein kinase At1g51810 from Arabidopsis thaliana (Mouse-ear cress).